We begin with the raw amino-acid sequence, 492 residues long: uncharacterized protein (492 aa).

The next 13 helical transmembrane spans lie at 67–87 (VAIMSIYGSLVYMSTIIGGWL), 88–108 (ADRVFGTANTVFYGGIFIMFG), 110–130 (IALAYPGSSIAFYISMVLIIV), 157–177 (GFSIFYMGINLGGLLAPLIVG), 185–205 (YHLGFGAAAVGMLLGLIVFAL), 232–252 (IGVIIVAIAVIISVQTGVLTI), 255–275 (FIDLVSILGILIPVIYFIIMF), 294–314 (LFIGAVMFWAIQEQGATILAV), 333–353 (WFQSLNPLFVVIFAPIFAWLW), 367–387 (FSIGIILAGLSFIIMVFPAMQ), 392–412 (LVSPLWLVLSFLLVVLGELCL), 434–454 (SMWFLTNAAAQAINAQVAGLF), and 464–484 (GTIGLISIVLGGILLLLSPVI).

It belongs to the major facilitator superfamily. Proton-dependent oligopeptide transporter (POT/PTR) (TC 2.A.17) family.

The protein localises to the cell membrane. This is an uncharacterized protein from Bacillus subtilis (strain 168).